The chain runs to 213 residues: High frequency lysogenization protein HflD homolog (213 aa).

Residues 79-122 (QGLNAELTRYTLSLMVLERKLSSAKGALNTLGDRINGLQRQLDH) are a coiled coil.

The protein belongs to the HflD family.

Its subcellular location is the cytoplasm. The protein resides in the cell inner membrane. In Salmonella dublin (strain CT_02021853), this protein is High frequency lysogenization protein HflD homolog.